Reading from the N-terminus, the 757-residue chain is Protein ALTERED SEED GERMINATION 2 (757 aa).

6 WD repeats span residues 6–43 (FHDGNIFNLLHTRSQDPSHEVDQRMQFHSSLVRRLSQE), 48–87 (GHQGCVNALAWNSNGSLLISGSDDLRINIWNYSSRKLLHS), 91–132 (GHTA…GRAE), 145–185 (CHTR…SCPP), 213–253 (KQTL…PLAS), and 277–316 (RTNLHLTHVTFSPNGEEVLLSYSGEHVYLMNVNNGICSTG). The Nuclear localization signal motif lies at 245–257 (RRMLPPLASSRKR). One copy of the TPR repeat lies at 442–475 (FKAHYYMSEALQQLGKCKEALDFATAAQHMNPSD). The interval 519–601 (ANSDSSHDMS…SSSQNDRTSY (83 aa)) is disordered. Residues 523–532 (SSHDMSRSER) are compositionally biased toward basic and acidic residues. Positions 533 to 543 (EDSDYDEELEL) are enriched in acidic residues. Over residues 582–601 (TVDNASSGTASSSQNDRTSY) the composition is skewed to polar residues. 2 WD repeats span residues 618–658 (NVGT…LMKV) and 661–700 (GDESVLNCIQCHPFDSVVATSGIDNTIKIWSPTASVPSIV). Cysteine 754 is lipidated: S-12-hydroxyfarnesyl cysteine; by FTB/ERA1.

Interacts with DDB1; the subcellular localization of this complex depends on farnesylation status. Binds to HDA9 in the cytosol when farnesylated. In terms of processing, farnesylated at Cys-754 by FTB/ERA1; this modification triggers an exclusion from the nucleus.

Its subcellular location is the nucleus. The protein resides in the cytoplasm. It is found in the cytosol. Its pathway is protein modification; protein ubiquitination. Its function is as follows. May function as a substrate adapter for CUL4-DDB1 E3 ubiquitin-protein ligase complex. Negative regulator of fatty acid biosynthetic process and accumulation. Acts as an abscisic acid (ABA) negative regulator. Involved in responses to salt (NaCl) and osmotic (e.g. in response to mannitol and PEG) stresses. The polypeptide is Protein ALTERED SEED GERMINATION 2 (Arabidopsis thaliana (Mouse-ear cress)).